The chain runs to 299 residues: Mitochondrial 2-oxodicarboxylate carrier (299 aa).

Solcar repeat units lie at residues arginine 11–leucine 100, serine 107–methionine 196, and leucine 205–tryptophan 294. 6 helical membrane passes run isoleucine 17–valine 37, phenylalanine 70–valine 89, alanine 113–valine 133, glycine 167–phenylalanine 187, leucine 205–asparagine 225, and leucine 277–glutamate 297.

This sequence belongs to the mitochondrial carrier (TC 2.A.29) family. Expressed in placenta, gall bladder and colon.

It is found in the mitochondrion inner membrane. It carries out the reaction 2-oxoadipate(in) + 2-oxoglutarate(out) = 2-oxoadipate(out) + 2-oxoglutarate(in). It catalyses the reaction hexanedioate(in) + 2-oxoglutarate(out) = hexanedioate(out) + 2-oxoglutarate(in). The catalysed reaction is L-2-aminoadipate(in) + 2-oxoglutarate(out) = L-2-aminoadipate(out) + 2-oxoglutarate(in). The enzyme catalyses glutarate(in) + 2-oxoglutarate(out) = glutarate(out) + 2-oxoglutarate(in). It carries out the reaction 2-oxoheptanedioate(in) + 2-oxoglutarate(out) = 2-oxoheptanedioate(out) + 2-oxoglutarate(in). It catalyses the reaction heptanedioate(in) + 2-oxoglutarate(out) = heptanedioate(out) + 2-oxoglutarate(in). The catalysed reaction is citrate(in) + 2-oxoglutarate(out) = citrate(out) + 2-oxoglutarate(in). Its function is as follows. Transports dicarboxylates across the inner membranes of mitochondria by a counter-exchange mechanism. Can transport 2-oxoadipate (2-oxohexanedioate), 2-oxoglutarate, adipate (hexanedioate), glutarate, and to a lesser extent, pimelate (heptanedioate), 2-oxopimelate (2-oxoheptanedioate), 2-aminoadipate (2-aminohexanedioate), oxaloacetate, and citrate. Plays a central role in catabolism of lysine, hydroxylysine, and tryptophan, by transporting common metabolite intermediates (such as 2-oxoadipate) into the mitochondria, where it is converted into acetyl-CoA and can enter the citric acid (TCA) cycle. The polypeptide is Mitochondrial 2-oxodicarboxylate carrier (SLC25A21) (Homo sapiens (Human)).